The primary structure comprises 189 residues: Elongation factor P (189 aa).

It belongs to the elongation factor P family.

It localises to the cytoplasm. It functions in the pathway protein biosynthesis; polypeptide chain elongation. Its function is as follows. Involved in peptide bond synthesis. Stimulates efficient translation and peptide-bond synthesis on native or reconstituted 70S ribosomes in vitro. Probably functions indirectly by altering the affinity of the ribosome for aminoacyl-tRNA, thus increasing their reactivity as acceptors for peptidyl transferase. In Rhizobium etli (strain CIAT 652), this protein is Elongation factor P.